The sequence spans 674 residues: Linear primary-alkylsulfatase (674 aa).

Positions Met1–Ala41 are cleaved as a signal peptide. Zn(2+) is bound by residues His192, His194, Asp196, His197, Glu303, and Glu322. Sulfate-binding positions include Asn330 to Arg335 and Arg340. His367 is a binding site for Zn(2+). Residue Tyr428 coordinates sulfate.

Belongs to the metallo-beta-lactamase superfamily. Type III sulfatase family. As to quaternary structure, homodimer. Zn(2+) is required as a cofactor.

It is found in the periplasm. The catalysed reaction is a primary linear alkyl sulfate ester + H2O = a primary alcohol + sulfate + H(+). Its activity is regulated as follows. Inhibited by EDTA. Slightly activated in the presence of Ca(2+). Functionally, alkylsulfatase that cleaves primary alkyl sulfates such as sodium octyl sulfate and the widely used detergent sodium dodecyl sulfate (SDS). The protein is Linear primary-alkylsulfatase of Pseudomonas sp.